Here is a 336-residue protein sequence, read N- to C-terminus: tRNA N6-adenosine threonylcarbamoyltransferase (336 aa).

2 residues coordinate Fe cation: His112 and His116. Substrate contacts are provided by residues 136 to 140 (LVSGG), Asp169, Gly182, and Asn276. Asp304 is a Fe cation binding site.

The protein belongs to the KAE1 / TsaD family. Fe(2+) serves as cofactor.

It localises to the cytoplasm. The enzyme catalyses L-threonylcarbamoyladenylate + adenosine(37) in tRNA = N(6)-L-threonylcarbamoyladenosine(37) in tRNA + AMP + H(+). In terms of biological role, required for the formation of a threonylcarbamoyl group on adenosine at position 37 (t(6)A37) in tRNAs that read codons beginning with adenine. Is involved in the transfer of the threonylcarbamoyl moiety of threonylcarbamoyl-AMP (TC-AMP) to the N6 group of A37, together with TsaE and TsaB. TsaD likely plays a direct catalytic role in this reaction. The protein is tRNA N6-adenosine threonylcarbamoyltransferase of Francisella philomiragia subsp. philomiragia (strain ATCC 25017 / CCUG 19701 / FSC 153 / O#319-036).